The sequence spans 431 residues: Glutamate-1-semialdehyde 2,1-aminomutase (431 aa).

N6-(pyridoxal phosphate)lysine is present on K269.

This sequence belongs to the class-III pyridoxal-phosphate-dependent aminotransferase family. HemL subfamily. As to quaternary structure, homodimer. Pyridoxal 5'-phosphate serves as cofactor.

Its subcellular location is the cytoplasm. It catalyses the reaction (S)-4-amino-5-oxopentanoate = 5-aminolevulinate. It functions in the pathway porphyrin-containing compound metabolism; protoporphyrin-IX biosynthesis; 5-aminolevulinate from L-glutamyl-tRNA(Glu): step 2/2. This chain is Glutamate-1-semialdehyde 2,1-aminomutase, found in Francisella tularensis subsp. tularensis (strain SCHU S4 / Schu 4).